A 78-amino-acid polypeptide reads, in one-letter code: MSNKGQLLQDPFLNALRKEHVPVSIYLVNGIKLQGNIESFDQYVVLLRNTVTQMVYKHAISTVVPARPVNFHPDSEQS.

A Sm domain is found at 10–69 (DPFLNALRKEHVPVSIYLVNGIKLQGNIESFDQYVVLLRNTVTQMVYKHAISTVVPARPV).

It belongs to the Hfq family. As to quaternary structure, homohexamer.

Functionally, RNA chaperone that binds small regulatory RNA (sRNAs) and mRNAs to facilitate mRNA translational regulation in response to envelope stress, environmental stress and changes in metabolite concentrations. Also binds with high specificity to tRNAs. The polypeptide is RNA-binding protein Hfq (Paraburkholderia phytofirmans (strain DSM 17436 / LMG 22146 / PsJN) (Burkholderia phytofirmans)).